We begin with the raw amino-acid sequence, 741 residues long: Cytosolic phospholipase A2 (741 aa).

Residues 1–116 form the C2 domain; sequence MSNIIVEHQY…KVAQMEHVTL (116 aa). Residues 1-172 are phospholipid binding; that stretch reads MSNIIVEHQY…IKKLLKMENP (172 aa). Ca(2+)-binding residues include aspartate 34, threonine 35, aspartate 37, asparagine 59, aspartate 87, alanine 88, and asparagine 89. Residues 132–729 enclose the PLA2c domain; sequence VCASTDLRFS…SLSEIENKKF (598 aa). Serine 223 serves as the catalytic Nucleophile. Positions 406–453 are disordered; it reads TSSSTMEEELEQIKPEHIVGDDSADNEEETQRGGTESADAEDERQRHA. Over residues 416–425 the composition is skewed to basic and acidic residues; the sequence is EQIKPEHIVG. A Phosphoserine; by MAPK modification is found at serine 498. Residue aspartate 540 is the Proton acceptor of the active site.

Activated by phosphorylation on a serine residue.

The protein resides in the cytoplasm. It is found in the cytoplasmic vesicle. The enzyme catalyses a 1,2-diacyl-sn-glycero-3-phosphocholine + H2O = a 1-acyl-sn-glycero-3-phosphocholine + a fatty acid + H(+). It catalyses the reaction a 1-acyl-sn-glycero-3-phosphocholine + H2O = sn-glycerol 3-phosphocholine + a fatty acid + H(+). With respect to regulation, stimulated by agonists such as ATP, EGF, thrombin and bradykinin as well as by cytosolic Ca(2+). Its function is as follows. Selectively hydrolyzes arachidonyl phospholipids in the sn-2 position releasing arachidonic acid. Together with its lysophospholipid activity, it is implicated in the initiation of the inflammatory response. The sequence is that of Cytosolic phospholipase A2 (pla2g4a) from Danio rerio (Zebrafish).